The sequence spans 1220 residues: Polycomb protein Sfmbt (1220 aa).

Residues 322 to 357 form an FCS-type zinc finger; the sequence is PIQKDGMAVCKRCGAIGVKHTFYTKSRRFCSMACAR. Zn(2+) contacts are provided by C331, C334, C351, and C355. 2 disordered regions span residues 371–399 and 464–483; these read GDQA…QSQS and DATA…SYLS. Polar residues predominate over residues 473–482; that stretch reads EGASTPNSYL. MBT repeat units lie at residues 536–647, 655–753, 761–871, and 879–975; these read YDWL…LIPP, KDWK…LAAP, LAGR…VTPP, and FTWE…LEGP. 2 disordered regions span residues 976 to 1024 and 1050 to 1092; these read PRVA…IALK and NNQP…AGSG. The segment covering 991–1000 has biased composition (basic residues); it reads KIQRKRKPKK. Over residues 1052–1068 the composition is skewed to acidic residues; the sequence is QPEEEGDEEDPDADGDG. Polar residues predominate over residues 1071–1082; it reads STSHISEQSTTQ. Over residues 1083–1092 the composition is skewed to low complexity; sequence SSSDLIAGSG. The region spanning 1140–1203 is the SAM domain; it reads WNVYDVSQFL…SDLIAQLKCK (64 aa).

In terms of assembly, interacts with pho as a component of the pho-repressive complex (PhoRC).

Its subcellular location is the nucleus. Its function is as follows. Polycomb group (PcG) protein that binds to the Polycomb response elements (PREs) found in the regulatory regions of many genes. PcG proteins act by forming multiprotein complexes, which are required to maintain the transcriptionally repressive state of homeotic genes throughout development. PcG proteins are not required to initiate repression, but to maintain it during later stages of development. They probably act via the methylation of histones, rendering chromatin heritably changed in its expressibility. Necessary but not sufficient to recruit a functional PcG repressive complex that represses target genes, suggesting that the recruitment of the distinct PRC1 complex is also required to allow a subsequent repression. The sequence is that of Polycomb protein Sfmbt from Drosophila melanogaster (Fruit fly).